The chain runs to 262 residues: 3-methyl-2-oxobutanoate hydroxymethyltransferase (262 aa).

Mg(2+) contacts are provided by D31 and D70. 3-methyl-2-oxobutanoate is bound by residues 31 to 32, D70, and K99; that span reads DS. E101 contributes to the Mg(2+) binding site. E168 functions as the Proton acceptor in the catalytic mechanism.

This sequence belongs to the PanB family. As to quaternary structure, homodecamer; pentamer of dimers. The cofactor is Mg(2+).

The protein resides in the cytoplasm. The enzyme catalyses 3-methyl-2-oxobutanoate + (6R)-5,10-methylene-5,6,7,8-tetrahydrofolate + H2O = 2-dehydropantoate + (6S)-5,6,7,8-tetrahydrofolate. It functions in the pathway cofactor biosynthesis; coenzyme A biosynthesis. Catalyzes the reversible reaction in which hydroxymethyl group from 5,10-methylenetetrahydrofolate is transferred onto alpha-ketoisovalerate to form ketopantoate. This is 3-methyl-2-oxobutanoate hydroxymethyltransferase from Cenarchaeum symbiosum (strain A).